Here is a 226-residue protein sequence, read N- to C-terminus: Cytidylate kinase (226 aa).

Position 10–18 (glycine 10–threonine 18) interacts with ATP.

This sequence belongs to the cytidylate kinase family. Type 1 subfamily.

The protein localises to the cytoplasm. The enzyme catalyses CMP + ATP = CDP + ADP. It carries out the reaction dCMP + ATP = dCDP + ADP. This Enterococcus faecalis (strain ATCC 700802 / V583) protein is Cytidylate kinase.